We begin with the raw amino-acid sequence, 413 residues long: Transforming growth factor beta-2 proprotein (413 aa).

Residues 1-19 (MHYYVLFTFLTLDLAPVAL) form the signal peptide. Residues asparagine 72, asparagine 140, and asparagine 241 are each glycosylated (N-linked (GlcNAc...) asparagine). 4 disulfides stabilise this stretch: cysteine 308–cysteine 317, cysteine 316–cysteine 379, cysteine 345–cysteine 410, and cysteine 349–cysteine 412.

The protein belongs to the TGF-beta family. As to quaternary structure, interacts with Transforming growth factor beta-2 (TGF-beta-2) chain; interaction is non-covalent and maintains (TGF-beta-2) in a latent state. Homodimer; disulfide-linked. Interacts with TGF-beta receptors (tgfbr1 and tgfbr2), leading to signal transduction. Post-translationally, the precursor proprotein is cleaved in the Golgi apparatus to form Transforming growth factor beta-2 (TGF-beta-2) and Latency-associated peptide (LAP) chains, which remain non-covalently linked, rendering TGF-beta-2 inactive.

Its subcellular location is the secreted. It is found in the extracellular space. It localises to the extracellular matrix. In terms of biological role, precursor of the Latency-associated peptide (LAP) and Transforming growth factor beta-2 (TGF-beta-2) chains, which constitute the regulatory and active subunit of TGF-beta-2, respectively. Its function is as follows. Required to maintain the Transforming growth factor beta-2 (TGF-beta-2) chain in a latent state during storage in extracellular matrix. Associates non-covalently with TGF-beta-2 and regulates its activation via interaction with 'milieu molecules', such as ltbp1 and lrrc32/garp, that control activation of TGF-beta-2. Multifunctional protein that regulates various processes such as angiogenesis and heart development. Activation into mature form follows different steps: following cleavage of the proprotein in the Golgi apparatus, Latency-associated peptide (LAP) and Transforming growth factor beta-2 (TGF-beta-2) chains remain non-covalently linked rendering TGF-beta-2 inactive during storage in extracellular matrix. At the same time, LAP chain interacts with 'milieu molecules', such as ltbp1 and lrrc32/garp, that control activation of TGF-beta-2 and maintain it in a latent state during storage in extracellular milieus. Once activated following release of LAP, TGF-beta-2 acts by binding to TGF-beta receptors (tgfbr1 and tgfbr2), which transduce signal. The protein is Transforming growth factor beta-2 proprotein (tgfb2) of Xenopus laevis (African clawed frog).